A 60-amino-acid chain; its full sequence is Large ribosomal subunit protein uL30 (60 aa).

It belongs to the universal ribosomal protein uL30 family. Part of the 50S ribosomal subunit.

The chain is Large ribosomal subunit protein uL30 from Dehalococcoides mccartyi (strain ATCC BAA-2100 / JCM 16839 / KCTC 5957 / BAV1).